A 202-amino-acid polypeptide reads, in one-letter code: Glycerol-3-phosphate acyltransferase (202 aa).

Transmembrane regions (helical) follow at residues V11–L31, P87–F107, F116–L136, and L158–L178.

Belongs to the PlsY family. In terms of assembly, probably interacts with PlsX.

It is found in the cell inner membrane. It carries out the reaction an acyl phosphate + sn-glycerol 3-phosphate = a 1-acyl-sn-glycero-3-phosphate + phosphate. Its pathway is lipid metabolism; phospholipid metabolism. Functionally, catalyzes the transfer of an acyl group from acyl-phosphate (acyl-PO(4)) to glycerol-3-phosphate (G3P) to form lysophosphatidic acid (LPA). This enzyme utilizes acyl-phosphate as fatty acyl donor, but not acyl-CoA or acyl-ACP. This is Glycerol-3-phosphate acyltransferase from Methylorubrum extorquens (strain PA1) (Methylobacterium extorquens).